A 101-amino-acid chain; its full sequence is Large ribosomal subunit protein uL23 (101 aa).

Belongs to the universal ribosomal protein uL23 family. As to quaternary structure, part of the 50S ribosomal subunit. Contacts protein L29, and trigger factor when it is bound to the ribosome.

Its function is as follows. One of the early assembly proteins it binds 23S rRNA. One of the proteins that surrounds the polypeptide exit tunnel on the outside of the ribosome. Forms the main docking site for trigger factor binding to the ribosome. The sequence is that of Large ribosomal subunit protein uL23 from Thiobacillus denitrificans (strain ATCC 25259 / T1).